The primary structure comprises 366 residues: Anhydro-N-acetylmuramic acid kinase (366 aa).

10–17 is a binding site for ATP; sequence GTSMDGID.

It belongs to the anhydro-N-acetylmuramic acid kinase family.

The enzyme catalyses 1,6-anhydro-N-acetyl-beta-muramate + ATP + H2O = N-acetyl-D-muramate 6-phosphate + ADP + H(+). Its pathway is amino-sugar metabolism; 1,6-anhydro-N-acetylmuramate degradation. It functions in the pathway cell wall biogenesis; peptidoglycan recycling. Catalyzes the specific phosphorylation of 1,6-anhydro-N-acetylmuramic acid (anhMurNAc) with the simultaneous cleavage of the 1,6-anhydro ring, generating MurNAc-6-P. Is required for the utilization of anhMurNAc either imported from the medium or derived from its own cell wall murein, and thus plays a role in cell wall recycling. This is Anhydro-N-acetylmuramic acid kinase from Legionella pneumophila (strain Corby).